Here is a 129-residue protein sequence, read N- to C-terminus: D-ribose pyranase (129 aa).

Residue H20 is the Proton donor of the active site. Residues D28, H96, and 118–120 (YAN) contribute to the substrate site.

The protein belongs to the RbsD / FucU family. RbsD subfamily. In terms of assembly, homodecamer.

The protein localises to the cytoplasm. It carries out the reaction beta-D-ribopyranose = beta-D-ribofuranose. The protein operates within carbohydrate metabolism; D-ribose degradation; D-ribose 5-phosphate from beta-D-ribopyranose: step 1/2. In terms of biological role, catalyzes the interconversion of beta-pyran and beta-furan forms of D-ribose. The protein is D-ribose pyranase of Streptomyces coelicolor (strain ATCC BAA-471 / A3(2) / M145).